The chain runs to 562 residues: 2-succinyl-5-enolpyruvyl-6-hydroxy-3-cyclohexene-1-carboxylate synthase (562 aa).

This sequence belongs to the TPP enzyme family. MenD subfamily. In terms of assembly, homodimer. Mg(2+) serves as cofactor. Requires Mn(2+) as cofactor. Thiamine diphosphate is required as a cofactor.

It carries out the reaction isochorismate + 2-oxoglutarate + H(+) = 5-enolpyruvoyl-6-hydroxy-2-succinyl-cyclohex-3-ene-1-carboxylate + CO2. It functions in the pathway quinol/quinone metabolism; 1,4-dihydroxy-2-naphthoate biosynthesis; 1,4-dihydroxy-2-naphthoate from chorismate: step 2/7. Its pathway is cofactor biosynthesis; phylloquinone biosynthesis. Catalyzes the thiamine diphosphate-dependent decarboxylation of 2-oxoglutarate and the subsequent addition of the resulting succinic semialdehyde-thiamine pyrophosphate anion to isochorismate to yield 2-succinyl-5-enolpyruvyl-6-hydroxy-3-cyclohexene-1-carboxylate (SEPHCHC). This chain is 2-succinyl-5-enolpyruvyl-6-hydroxy-3-cyclohexene-1-carboxylate synthase, found in Thermosynechococcus vestitus (strain NIES-2133 / IAM M-273 / BP-1).